The following is a 71-amino-acid chain: Bowman-Birk type trypsin inhibitor (71 aa).

6 disulfides stabilise this stretch: C10-C67, C11-C27, C14-C63, C17-C25, C35-C42, and C39-C55.

It belongs to the Bowman-Birk serine protease inhibitor family.

Its function is as follows. Inhibits trypsin but not chymotrypsin. In Triticum aestivum (Wheat), this protein is Bowman-Birk type trypsin inhibitor.